The following is a 1588-amino-acid chain: Pentafunctional AROM polypeptide (1588 aa).

Residues 1 to 392 form a 3-dehydroquinate synthase region; the sequence is MVQLAKVPIL…YGDSAQFVSD (392 aa). Residues 43–45, 78–81, 109–111, and Asp114 each bind NAD(+); these read DTN, ETSK, and GGV. Arg125 serves as a coordination point for 7-phospho-2-dehydro-3-deoxy-D-arabino-heptonate. Residue 134–135 participates in NAD(+) binding; the sequence is TS. 7-phospho-2-dehydro-3-deoxy-D-arabino-heptonate is bound by residues Asp141 and Lys147. Lys156 lines the NAD(+) pocket. 7-phospho-2-dehydro-3-deoxy-D-arabino-heptonate is bound at residue Asn157. Residues 174–177 and Asn185 contribute to the NAD(+) site; that span reads WLET. Residue Glu189 participates in Zn(2+) binding. Residues 189–192 and Lys258 contribute to the 7-phospho-2-dehydro-3-deoxy-D-arabino-heptonate site; that span reads EVIK. Glu268 serves as the catalytic Proton acceptor; for 3-dehydroquinate synthase activity. 7-phospho-2-dehydro-3-deoxy-D-arabino-heptonate is bound by residues 272–276 and His279; that span reads RNLLN. His279 contacts Zn(2+). His283 serves as the catalytic Proton acceptor; for 3-dehydroquinate synthase activity. 7-phospho-2-dehydro-3-deoxy-D-arabino-heptonate-binding residues include His295 and Lys364. His295 is a binding site for Zn(2+). Residues 405-871 form an EPSP synthase region; it reads VYPFKDIPAD…WDVLHSELGA (467 aa). Cys853 (for EPSP synthase activity) is an active-site residue. The interval 890 to 1080 is shikimate kinase; that stretch reads SVVIIGMRAA…IPSGRSAFVC (191 aa). 895-902 lines the ATP pocket; sequence GMRAAGKT. A 3-dehydroquinase region spans residues 1081-1293; the sequence is LTFDDLTEQT…AAPGQLTVAQ (213 aa). The Proton acceptor; for 3-dehydroquinate dehydratase activity role is filled by His1198. Lys1227 serves as the catalytic Schiff-base intermediate with substrate; for 3-dehydroquinate dehydratase activity. The tract at residues 1306-1588 is shikimate dehydrogenase; sequence PKELFVVGKP…KAIFDAVTKE (283 aa).

This sequence in the N-terminal section; belongs to the sugar phosphate cyclases superfamily. Dehydroquinate synthase family. It in the 2nd section; belongs to the EPSP synthase family. The protein in the 3rd section; belongs to the shikimate kinase family. In the 4th section; belongs to the type-I 3-dehydroquinase family. This sequence in the C-terminal section; belongs to the shikimate dehydrogenase family. As to quaternary structure, homodimer. The cofactor is Zn(2+).

It localises to the cytoplasm. The enzyme catalyses 7-phospho-2-dehydro-3-deoxy-D-arabino-heptonate = 3-dehydroquinate + phosphate. The catalysed reaction is 3-dehydroquinate = 3-dehydroshikimate + H2O. It carries out the reaction shikimate + NADP(+) = 3-dehydroshikimate + NADPH + H(+). It catalyses the reaction shikimate + ATP = 3-phosphoshikimate + ADP + H(+). The enzyme catalyses 3-phosphoshikimate + phosphoenolpyruvate = 5-O-(1-carboxyvinyl)-3-phosphoshikimate + phosphate. The protein operates within metabolic intermediate biosynthesis; chorismate biosynthesis; chorismate from D-erythrose 4-phosphate and phosphoenolpyruvate: step 2/7. It functions in the pathway metabolic intermediate biosynthesis; chorismate biosynthesis; chorismate from D-erythrose 4-phosphate and phosphoenolpyruvate: step 3/7. It participates in metabolic intermediate biosynthesis; chorismate biosynthesis; chorismate from D-erythrose 4-phosphate and phosphoenolpyruvate: step 4/7. Its pathway is metabolic intermediate biosynthesis; chorismate biosynthesis; chorismate from D-erythrose 4-phosphate and phosphoenolpyruvate: step 5/7. The protein operates within metabolic intermediate biosynthesis; chorismate biosynthesis; chorismate from D-erythrose 4-phosphate and phosphoenolpyruvate: step 6/7. Its function is as follows. The AROM polypeptide catalyzes 5 consecutive enzymatic reactions in prechorismate polyaromatic amino acid biosynthesis. In Saccharomyces cerevisiae (strain Lalvin EC1118 / Prise de mousse) (Baker's yeast), this protein is Pentafunctional AROM polypeptide.